The sequence spans 326 residues: tRNA-modifying protein YgfZ (326 aa).

Residues Trp-27 and Trp-189 each contribute to the folate site.

The protein belongs to the tRNA-modifying YgfZ family.

It is found in the cytoplasm. Folate-binding protein involved in regulating the level of ATP-DnaA and in the modification of some tRNAs. It is probably a key factor in regulatory networks that act via tRNA modification, such as initiation of chromosomal replication. This is tRNA-modifying protein YgfZ from Escherichia coli (strain SE11).